Reading from the N-terminus, the 111-residue chain is Cytochrome c6 (111 aa).

An N-terminal signal peptide occupies residues 1–25; the sequence is MKKIFSLVLLGIALFTFAFSSPALA. 4 residues coordinate heme c: Cys39, Cys42, His43, and Met83.

This sequence belongs to the cytochrome c family. PetJ subfamily. In terms of assembly, monomer. In terms of processing, binds 1 heme c group covalently per subunit.

Its subcellular location is the cellular thylakoid lumen. Functions as an electron carrier between membrane-bound cytochrome b6-f and photosystem I in oxygenic photosynthesis. This is Cytochrome c6 (petJ) from Nostoc sp. (strain PCC 7120 / SAG 25.82 / UTEX 2576).